A 660-amino-acid chain; its full sequence is DNA mismatch repair protein MutL (660 aa).

It belongs to the DNA mismatch repair MutL/HexB family.

This protein is involved in the repair of mismatches in DNA. It is required for dam-dependent methyl-directed DNA mismatch repair. May act as a 'molecular matchmaker', a protein that promotes the formation of a stable complex between two or more DNA-binding proteins in an ATP-dependent manner without itself being part of a final effector complex. The protein is DNA mismatch repair protein MutL of Streptococcus equi subsp. equi (strain 4047).